Here is a 529-residue protein sequence, read N- to C-terminus: Ribonuclease Y (529 aa).

The helical transmembrane segment at 4-24 (GLIYISLEVLVACLITALIMY) threads the bilayer. The region spanning 216-297 (LTSRIALPCS…NRIEEVYHRV (82 aa)) is the KH domain. The HD domain occupies 342–435 (ALQHSKEVAL…VCAADALSAG (94 aa)).

It belongs to the RNase Y family.

It localises to the cell membrane. In terms of biological role, endoribonuclease that initiates mRNA decay. The protein is Ribonuclease Y of Helicobacter pylori (strain J99 / ATCC 700824) (Campylobacter pylori J99).